Reading from the N-terminus, the 456-residue chain is Adenylosuccinate synthetase isozyme 2 (456 aa).

Over residues 1-14 the composition is skewed to polar residues; the sequence is MSISESSPAATSLP. The segment at 1–24 is disordered; sequence MSISESSPAATSLPNGDCGRPRAR. Residues 39 to 45 and 67 to 69 contribute to the GTP site; these read GDEGKGK and GHT. Asp-40 functions as the Proton acceptor in the catalytic mechanism. 2 residues coordinate Mg(2+): Asp-40 and Gly-67. Asp-40 provides a ligand contact to substrate. IMP-binding positions include 40–43, 65–68, Thr-162, Arg-176, Asn-255, Thr-270, and Arg-334; these read DEGK and NAGH. The active-site Proton donor is the His-68. Residue 330 to 336 participates in substrate binding; that stretch reads VTTGRKR. Residues Arg-336, 362–364, and 444–447 each bind GTP; these read KLD and GVGK.

Belongs to the adenylosuccinate synthetase family. In terms of assembly, homodimer. It depends on Mg(2+) as a cofactor.

It is found in the cytoplasm. The protein resides in the mitochondrion. The catalysed reaction is IMP + L-aspartate + GTP = N(6)-(1,2-dicarboxyethyl)-AMP + GDP + phosphate + 2 H(+). It participates in purine metabolism; AMP biosynthesis via de novo pathway; AMP from IMP: step 1/2. Inhibited competitively by AMP and IMP and non-competitively by fructose 1,6-bisphosphate. Its function is as follows. Plays an important role in the de novo pathway and in the salvage pathway of purine nucleotide biosynthesis. Catalyzes the first committed step in the biosynthesis of AMP from IMP. This Mus musculus (Mouse) protein is Adenylosuccinate synthetase isozyme 2 (Adss2).